The sequence spans 88 residues: Small ribosomal subunit protein bS20 (88 aa).

The interval M1 to L28 is disordered. A compositionally biased stretch (basic residues) spans Q7 to S23.

It belongs to the bacterial ribosomal protein bS20 family.

Its function is as follows. Binds directly to 16S ribosomal RNA. The sequence is that of Small ribosomal subunit protein bS20 from Salinispora tropica (strain ATCC BAA-916 / DSM 44818 / JCM 13857 / NBRC 105044 / CNB-440).